A 158-amino-acid chain; its full sequence is 6,7-dimethyl-8-ribityllumazine synthase (158 aa).

Residues Phe-24, 58–60 (AFE), and 82–84 (AVI) contribute to the 5-amino-6-(D-ribitylamino)uracil site. Residue 87–88 (GT) participates in (2S)-2-hydroxy-3-oxobutyl phosphate binding. The Proton donor role is filled by His-90. Phe-115 contributes to the 5-amino-6-(D-ribitylamino)uracil binding site. Arg-129 is a binding site for (2S)-2-hydroxy-3-oxobutyl phosphate.

Belongs to the DMRL synthase family. In terms of assembly, forms an icosahedral capsid composed of 60 subunits, arranged as a dodecamer of pentamers.

It carries out the reaction (2S)-2-hydroxy-3-oxobutyl phosphate + 5-amino-6-(D-ribitylamino)uracil = 6,7-dimethyl-8-(1-D-ribityl)lumazine + phosphate + 2 H2O + H(+). Its pathway is cofactor biosynthesis; riboflavin biosynthesis; riboflavin from 2-hydroxy-3-oxobutyl phosphate and 5-amino-6-(D-ribitylamino)uracil: step 1/2. In terms of biological role, catalyzes the formation of 6,7-dimethyl-8-ribityllumazine by condensation of 5-amino-6-(D-ribitylamino)uracil with 3,4-dihydroxy-2-butanone 4-phosphate. This is the penultimate step in the biosynthesis of riboflavin. The polypeptide is 6,7-dimethyl-8-ribityllumazine synthase (Pseudomonas putida (strain GB-1)).